The following is a 193-amino-acid chain: Putative nucleotidase YqfW (193 aa).

It belongs to the 5'(3')-deoxyribonucleotidase family.

The protein is Putative nucleotidase YqfW (yqfW) of Bacillus subtilis (strain 168).